Here is a 308-residue protein sequence, read N- to C-terminus: Glutamyl-Q tRNA(Asp) synthetase (308 aa).

L-glutamate is bound by residues 19–23 (RFAPS) and Glu-55. Residues 22–32 (PSPSGELHFGS) carry the 'HIGH' region motif. Zn(2+)-binding residues include Cys-111, Cys-113, Tyr-125, and Cys-129. The L-glutamate site is built by Tyr-182 and Arg-200. Positions 238 to 242 (KLSKQ) match the 'KMSKS' region motif. An ATP-binding site is contributed by Lys-241.

It belongs to the class-I aminoacyl-tRNA synthetase family. GluQ subfamily. Zn(2+) serves as cofactor.

Its function is as follows. Catalyzes the tRNA-independent activation of glutamate in presence of ATP and the subsequent transfer of glutamate onto a tRNA(Asp). Glutamate is transferred on the 2-amino-5-(4,5-dihydroxy-2-cyclopenten-1-yl) moiety of the queuosine in the wobble position of the QUC anticodon. The chain is Glutamyl-Q tRNA(Asp) synthetase from Escherichia coli O6:H1 (strain CFT073 / ATCC 700928 / UPEC).